A 380-amino-acid polypeptide reads, in one-letter code: Cytochrome b (380 aa).

Helical transmembrane passes span 34 to 54 (FGSL…LLAM), 78 to 99 (WLIR…FLHI), 114 to 134 (WNTG…GYVL), and 179 to 199 (FFAL…VHLT). Positions 84 and 98 each coordinate heme b. Heme b-binding residues include histidine 183 and histidine 197. A ubiquinone is bound at residue histidine 202. 4 consecutive transmembrane segments (helical) span residues 227-247 (LKDI…ALFS), 289-309 (LGGV…PFLH), 321-341 (LSQT…WIGS), and 348-368 (FMII…ILFP).

The protein belongs to the cytochrome b family. As to quaternary structure, the cytochrome bc1 complex contains 11 subunits: 3 respiratory subunits (MT-CYB, CYC1 and UQCRFS1), 2 core proteins (UQCRC1 and UQCRC2) and 6 low-molecular weight proteins (UQCRH/QCR6, UQCRB/QCR7, UQCRQ/QCR8, UQCR10/QCR9, UQCR11/QCR10 and a cleavage product of UQCRFS1). This cytochrome bc1 complex then forms a dimer. Requires heme b as cofactor.

It is found in the mitochondrion inner membrane. In terms of biological role, component of the ubiquinol-cytochrome c reductase complex (complex III or cytochrome b-c1 complex) that is part of the mitochondrial respiratory chain. The b-c1 complex mediates electron transfer from ubiquinol to cytochrome c. Contributes to the generation of a proton gradient across the mitochondrial membrane that is then used for ATP synthesis. The polypeptide is Cytochrome b (MT-CYB) (Gallus lafayettii (Sri Lanka junglefowl)).